Reading from the N-terminus, the 422-residue chain is Ena/VASP-like protein (422 aa).

Residues 4 to 118 (FEEFSEQSIC…NAMLFALNIM (115 aa)) enclose the WH1 domain. The span at 120 to 135 (SQEGGPSSQRQVQNGP) shows a compositional bias: polar residues. Disordered regions lie at residues 120–139 (SQEG…SPDE) and 147–375 (VMEQ…PAGS). Ser-136 carries the post-translational modification Phosphoserine. Positions 147–163 (VMEQHQQQRQESLERRT) are enriched in basic and acidic residues. Positions 175–186 (PSSAASAPVSCS) are enriched in low complexity. Positions 187 to 212 (GPPPPPPPPVPPPPTGATPPPPPPLP) are enriched in pro residues. An EVH2 block A region spans residues 228–248 (GLAAAIAGAKLRRVQRPEDAS). The segment at 228–419 (GLAAAIAGAK…DAIRQELSGI (192 aa)) is EVH2. A KLKR motif is present at residues 237-240 (KLRR). Positions 248-259 (SGGSSPSGTSKS) are enriched in low complexity. Phosphoserine occurs at positions 252 and 265. An EVH2 block B region spans residues 271–288 (GGLMEEMNKLLAKRRKAA). Residues 305–326 (EDPSTSPSPGTRAASQPPNSSE) show a composition bias toward polar residues. Residues Ser-310, Ser-312, Ser-335, Ser-337, Ser-347, Ser-355, Ser-360, and Ser-375 each carry the phosphoserine modification. A compositionally biased stretch (basic and acidic residues) spans 327–337 (AGRKPWERSNS). The tract at residues 348–368 (RTPSVAKSPEAKSPLQSQPHS) is required for interaction with ZDHHC17. Residues 385–419 (DLDRMKQEILEEVVRELHKVKDEIIDAIRQELSGI) are EVH2 block C. Residues 388-414 (RMKQEILEEVVRELHKVKDEIIDAIRQ) adopt a coiled-coil conformation.

Belongs to the Ena/VASP family. In terms of assembly, homotetramer. Binds to the SH3 domains of ABL1, LYN and SRC. Also binds to profilin, with preference for isoform IIa of PFN2, and the WW domain of APBB1/FE65. Binds to SEMA6A. Interacts, via the Pro-rich region, with the C-terminal SH3 domain of DNMBP. Interacts with RAPH1. Binds, via the EVH1 domain, the Pro-rich domain of Listeria monocytogenes actA. Binds, via the EVH1 domain, the Pro-rich domain of ZYX. Interacts with FYB1. Interacts with ZDHHC17. Post-translationally, phosphorylated by PKA; phosphorylation abolishes binding to SH3 domains of ABL and SRC.

Its subcellular location is the cytoplasm. The protein localises to the cytoskeleton. It localises to the stress fiber. It is found in the cell projection. The protein resides in the lamellipodium. Its function is as follows. Ena/VASP proteins are actin-associated proteins involved in a range of processes dependent on cytoskeleton remodeling and cell polarity such as axon guidance and lamellipodial and filopodial dynamics in migrating cells. EVL enhances actin nucleation and polymerization. The polypeptide is Ena/VASP-like protein (EVL) (Pongo abelii (Sumatran orangutan)).